The following is a 488-amino-acid chain: Sucrose phosphorylase (488 aa).

Sucrose-binding positions include aspartate 50, histidine 88, 191–193, glutamate 233, 290–291, 341–344, and arginine 398; these read RLD, HD, and DLYQ. The Nucleophile role is filled by aspartate 193. The active-site Proton donor is the glutamate 233.

It belongs to the glycosyl hydrolase 13 family. Sucrose phosphorylase subfamily.

The enzyme catalyses sucrose + phosphate = D-fructose + alpha-D-glucose 1-phosphate. The protein is Sucrose phosphorylase of Agrobacterium vitis (Rhizobium vitis).